The chain runs to 211 residues: uncharacterized protein (211 aa).

Transmembrane regions (helical) follow at residues 22–42 (FINF…GLKV), 111–131 (IIGA…WFPV), and 133–153 (GMAG…FMIT).

It to E.coli YkgB. This sequence to H.influenzae HI_0219.

It localises to the cell membrane. This is an uncharacterized protein from Mannheimia haemolytica (Pasteurella haemolytica).